The primary structure comprises 851 residues: Thrombospondin type-1 domain-containing protein 1 (851 aa).

The first 24 residues, 1-24 (MKPMLKDFSNLLLVVLCDYVLGEA), serve as a signal peptide directing secretion. Over 25 to 412 (EYLLLQEPVH…SPQDPVKSNN (388 aa)) the chain is Extracellular. N53, N58, N69, N110, N135, and N304 each carry an N-linked (GlcNAc...) asparagine glycan. A TSP type-1 domain is found at 339–392 (IETWGPWQPWSPCSTTCGDAVRERRRLCVTSFPSRPSCSGMSSETSPCSLEECA). 3 cysteine pairs are disulfide-bonded: C351–C386, C355–C391, and C366–C376. The chain crosses the membrane as a helical span at residues 413 to 433 (VVTVTGISLCLFIIFATVLIT). Over 434–851 (LWRRFGRAPK…STLSVEKLVI (418 aa)) the chain is Cytoplasmic. Residue S462 is modified to Phosphoserine. 3 disordered regions span residues 471–516 (SEPR…ESFQ), 626–646 (KSQIRSTGGRDGSSERCHSRS), and 682–777 (SRMR…SSPI). Over residues 685-695 (RTWDQMEDRCR) the composition is skewed to basic and acidic residues. The segment covering 765 to 776 (SHRSASRKQSSP) has biased composition (polar residues).

In terms of assembly, part of a complex composed of THSD1, PTK2/FAK1, TLN1 and VCL. Interacts with TLN1. In terms of tissue distribution, expressed in cerebral vascular endothelium.

It localises to the endosome membrane. It is found in the cell junction. The protein resides in the focal adhesion. Its function is as follows. Is a positive regulator of nascent focal adhesion assembly, involved in the modulation of endothelial cell attachment to the extracellular matrix. The protein is Thrombospondin type-1 domain-containing protein 1 (Thsd1) of Mus musculus (Mouse).